Consider the following 266-residue polypeptide: Succinate dehydrogenase [ubiquinone] iron-sulfur subunit, mitochondrial (266 aa).

A mitochondrion-targeting transit peptide spans 1-20 (MLNVLLRRKAFCLVTKKGMA). A 2Fe-2S ferredoxin-type domain is found at 36–127 (FKVYRWNPDE…QLKIYPLPHM (92 aa)). [2Fe-2S] cluster-binding residues include cysteine 87, cysteine 92, cysteine 95, and cysteine 107. The region spanning 169 to 199 (DRKKLDGLYECILCACCSTSCPSYWWNQEQY) is the 4Fe-4S ferredoxin-type domain. [4Fe-4S] cluster-binding residues include cysteine 179, cysteine 182, and cysteine 185. Residue cysteine 189 participates in [3Fe-4S] cluster binding. Tryptophan 194 provides a ligand contact to a ubiquinone. The [3Fe-4S] cluster site is built by cysteine 236 and cysteine 242. Position 246 (cysteine 246) interacts with [4Fe-4S] cluster.

The protein belongs to the succinate dehydrogenase/fumarate reductase iron-sulfur protein family. In terms of assembly, component of complex II composed of four subunits: a flavoprotein (FP), an iron-sulfur protein (IP), and a cytochrome b composed of a large and a small subunit. The cofactor is [2Fe-2S] cluster. Requires [3Fe-4S] cluster as cofactor. [4Fe-4S] cluster is required as a cofactor.

It is found in the mitochondrion inner membrane. It carries out the reaction a quinone + succinate = fumarate + a quinol. The protein operates within carbohydrate metabolism; tricarboxylic acid cycle; fumarate from succinate (eukaryal route): step 1/1. Subunit of succinate dehydrogenase (SDH) that is involved in complex II of the mitochondrial electron transport chain and is responsible for transferring electrons from succinate to ubiquinone (coenzyme Q). SDH1 and SDH2 form the catalytic dimer. Electrons flow from succinate to the FAD bound to SDH1, and sequentially through the iron-sulfur clusters bound to SDH2 and enter the membrane dimer formed by SDH3 and SDH4. The chain is Succinate dehydrogenase [ubiquinone] iron-sulfur subunit, mitochondrial (SDH2) from Saccharomyces cerevisiae (strain ATCC 204508 / S288c) (Baker's yeast).